A 312-amino-acid polypeptide reads, in one-letter code: Protoheme IX farnesyltransferase (312 aa).

At 1–36 the chain is on the cytoplasmic side; sequence MNKSNTAIDPTNVIEAGPDSSVADVQQKSWKDYLVL. Residues 37-55 traverse the membrane as a helical segment; sequence AKQGIVTSNLITTFAGIYL. At 56-69 the chain is on the extracellular side; that stretch reads AIVYTGTVFTMHLD. Residues 70 to 88 form a helical membrane-spanning segment; the sequence is TMIFALLGAALVMAGGCTL. The Cytoplasmic portion of the chain corresponds to 89–110; it reads NNYIDRDIDHLMERTKERPTVT. A helical membrane pass occupies residues 111–129; it reads GRFSAKHVLLVGLAQAALG. Residues 130 to 138 lie on the Extracellular side of the membrane; that stretch reads IIFLALTTP. Residues 139–157 form a helical membrane-spanning segment; sequence TAAVIGLIGLFIYVVLYTM. The Cytoplasmic portion of the chain corresponds to 158 to 228; sequence WTKRTTTLNT…YRAAGIPMLP (71 aa). The chain crosses the membrane as a helical span at residues 229–247; the sequence is VVAGFEMTKRQMVVYVAAL. Topologically, residues 248–259 are extracellular; sequence LPVSLMLYPFGL. Residues 260–275 form a helical membrane-spanning segment; that stretch reads VYTIVAAVLGVGWLAL. Residues 276-296 lie on the Cytoplasmic side of the membrane; the sequence is GIAGFKMKDDIKWARLMFVYS. Residues 297–307 form a helical membrane-spanning segment; sequence LNYLTILFVLM. Over 308 to 312 the chain is Extracellular; sequence VIVHF.

It belongs to the UbiA prenyltransferase family.

The protein resides in the cell membrane. The enzyme catalyses heme b + (2E,6E)-farnesyl diphosphate + H2O = Fe(II)-heme o + diphosphate. The protein operates within porphyrin-containing compound metabolism; heme O biosynthesis; heme O from protoheme: step 1/1. Converts protoheme IX and farnesyl diphosphate to heme O. The polypeptide is Protoheme IX farnesyltransferase (ctaB) (Alkalihalophilus pseudofirmus (strain ATCC BAA-2126 / JCM 17055 / OF4) (Bacillus pseudofirmus)).